The sequence spans 392 residues: BURP domain protein RD22 (392 aa).

The first 22 residues, 1 to 22 (MAIRLPLICLLGSFMVVAIAAD), serve as a signal peptide directing secretion. TXV repeat units lie at residues 56-58 (TNV), 78-80 (TAV), 100-102 (THV), and 125-127 (TDV). Residues 57–164 (NVQVGKGGVN…PFVYNYAAKE (108 aa)) form a 5 X approximate repeats region. A disordered region spans residues 61–136 (GKGGVNVNTH…VGVGKGGVTV (76 aa)). Positions 94-114 (GKPGGGTHVSVGSGKGHGGGV) are enriched in gly residues. The region spanning 176 to 392 (FFLEKDLVRG…PETHVVWFSY (217 aa)) is the BURP domain.

In terms of tissue distribution, expressed in seed. Highest expression in leaves and guard cells.

In terms of biological role, acts to suppress chlorophyll degradation under moisture stress. The protein is BURP domain protein RD22 of Arabidopsis thaliana (Mouse-ear cress).